The primary structure comprises 129 residues: Sigma factor-binding protein Crl (129 aa).

The tract at residues 99-119 (TQNCFHLKLVKTLEENFQLSV) is essential for activity.

It belongs to the Crl family.

The protein localises to the cytoplasm. In terms of biological role, binds to the sigma-S subunit of RNA polymerase, activating expression of sigma-S-regulated genes. Stimulates RNA polymerase holoenzyme formation and may bind to several other sigma factors, such as sigma-70 and sigma-32. This chain is Sigma factor-binding protein Crl, found in Vibrio vulnificus (strain CMCP6).